The following is a 249-amino-acid chain: Long form salivary protein D7L (249 aa).

The first 19 residues, 1–19 (MNAVITSLVFISLVGVGYS), serve as a signal peptide directing secretion. Intrachain disulfides connect Cys-36–Cys-66 and Cys-62–Cys-112. Position 49 (Trp-49) interacts with thromboxane A2. Trp-52 provides a ligand contact to leukotriene C4. Residue Tyr-63 coordinates thromboxane A2. The leukotriene C4 site is built by Gly-136 and Lys-154. Thromboxane A2 is bound at residue Lys-154. 3 disulfides stabilise this stretch: Cys-162-Cys-178, Cys-174-Cys-221, and Cys-211-Cys-230.

Belongs to the PBP/GOBP family.

The protein localises to the secreted. Functionally, modulates blood feeding of female sandflies on vertebrate species by binding and sequestering different mediators involved in the host response. Binds leukotriene C4, leukotriene D4, leukotriene E4 and U-46619, a stable analog of thromboxane A2. Does not bind histamine or serotonin. Inhibits platelet aggregation induced by low concentrations of collagen in thromboxane A2-dependent manner. The protein is Long form salivary protein D7L of Phlebotomus duboscqi (Sandfly).